We begin with the raw amino-acid sequence, 141 residues long: Nucleoside diphosphate kinase (141 aa).

The ATP site is built by K11, F59, R87, T93, R104, and N114. Catalysis depends on H117, which acts as the Pros-phosphohistidine intermediate.

The protein belongs to the NDK family. Homotetramer. It depends on Mg(2+) as a cofactor.

The protein localises to the cytoplasm. The enzyme catalyses a 2'-deoxyribonucleoside 5'-diphosphate + ATP = a 2'-deoxyribonucleoside 5'-triphosphate + ADP. The catalysed reaction is a ribonucleoside 5'-diphosphate + ATP = a ribonucleoside 5'-triphosphate + ADP. In terms of biological role, major role in the synthesis of nucleoside triphosphates other than ATP. The ATP gamma phosphate is transferred to the NDP beta phosphate via a ping-pong mechanism, using a phosphorylated active-site intermediate. The chain is Nucleoside diphosphate kinase from Laribacter hongkongensis (strain HLHK9).